The following is a 336-amino-acid chain: Dihydroorotate dehydrogenase (quinone) (336 aa).

FMN is bound by residues 62-66 and threonine 86; that span reads AGLDK. Lysine 66 is a substrate binding site. 111–115 is a substrate binding site; sequence NRMGF. The FMN site is built by asparagine 139 and asparagine 172. Substrate is bound at residue asparagine 172. Serine 175 serves as the catalytic Nucleophile. Asparagine 177 is a substrate binding site. Residues lysine 217 and threonine 245 each coordinate FMN. 246–247 serves as a coordination point for substrate; it reads NT. FMN is bound by residues glycine 268, glycine 297, and 318-319; that span reads YS.

The protein belongs to the dihydroorotate dehydrogenase family. Type 2 subfamily. In terms of assembly, monomer. It depends on FMN as a cofactor.

It is found in the cell membrane. It carries out the reaction (S)-dihydroorotate + a quinone = orotate + a quinol. The protein operates within pyrimidine metabolism; UMP biosynthesis via de novo pathway; orotate from (S)-dihydroorotate (quinone route): step 1/1. In terms of biological role, catalyzes the conversion of dihydroorotate to orotate with quinone as electron acceptor. This chain is Dihydroorotate dehydrogenase (quinone), found in Psychromonas ingrahamii (strain DSM 17664 / CCUG 51855 / 37).